We begin with the raw amino-acid sequence, 148 residues long: Probable glycine cleavage system H protein 2 (148 aa).

A Lipoyl-binding domain is found at 32–114 (VIVVGITDIA…YGKGWLVKMK (83 aa)). Residue Lys-73 is modified to N6-lipoyllysine.

The protein belongs to the GcvH family. As to quaternary structure, the glycine cleavage system is composed of four proteins: P, T, L and H. Requires (R)-lipoate as cofactor.

The glycine cleavage system catalyzes the degradation of glycine. The H protein shuttles the methylamine group of glycine from the P protein to the T protein. The polypeptide is Probable glycine cleavage system H protein 2 (Sulfurisphaera tokodaii (strain DSM 16993 / JCM 10545 / NBRC 100140 / 7) (Sulfolobus tokodaii)).